The primary structure comprises 317 residues: Dehydrogenase/reductase SDR family member 12 (317 aa).

NAD(+)-binding residues include Ser-50 and Ile-52. Ser-175 is a substrate binding site. NAD(+) contacts are provided by Tyr-201, Lys-205, and Thr-234. The Proton acceptor role is filled by Tyr-201.

It belongs to the short-chain dehydrogenases/reductases (SDR) family.

Putative oxidoreductase. This is Dehydrogenase/reductase SDR family member 12 from Homo sapiens (Human).